A 524-amino-acid polypeptide reads, in one-letter code: Alkaline phosphatase, tissue-nonspecific isozyme (524 aa).

The N-terminal stretch at 1-17 (MISPFLVLAIGTCLTNS) is a signal peptide. Residue Asp-60 participates in Mg(2+) binding. The Zn(2+) site is built by Asp-60 and Ser-110. The Phosphoserine intermediate role is filled by Ser-110. Phosphoserine is present on Ser-110. Cys-139 and Cys-201 form a disulfide bridge. Asn-140 carries an N-linked (GlcNAc...) asparagine glycan. Position 173 (Thr-173) interacts with Mg(2+). N-linked (GlcNAc...) asparagine glycosylation is present at Asn-230. Glu-235 provides a ligand contact to Ca(2+). Asn-271 is a glycosylation site (N-linked (GlcNAc...) asparagine). Ca(2+)-binding residues include Phe-290 and Glu-291. An N-linked (GlcNAc...) asparagine glycan is attached at Asn-302. Asp-306 lines the Ca(2+) pocket. Glu-332 is a binding site for Mg(2+). Positions 337, 341, 378, and 379 each coordinate Zn(2+). N-linked (GlcNAc...) asparagine glycosylation occurs at Asn-430. His-454 lines the Zn(2+) pocket. Cys-489 and Cys-497 form a disulfide bridge. Ser-499 carries GPI-anchor amidated serine lipidation. The propeptide at 500–524 (ASSAGGPSPGPLFLLLALPSLGILF) is removed in mature form.

The protein belongs to the alkaline phosphatase family. Homodimer. The cofactor is Mg(2+). It depends on Zn(2+) as a cofactor. Ca(2+) is required as a cofactor. In terms of processing, N-glycosylated.

The protein localises to the cell membrane. It is found in the extracellular vesicle membrane. Its subcellular location is the mitochondrion membrane. The protein resides in the mitochondrion intermembrane space. The catalysed reaction is a phosphate monoester + H2O = an alcohol + phosphate. It catalyses the reaction diphosphate + H2O = 2 phosphate + H(+). It carries out the reaction pyridoxal 5'-phosphate + H2O = pyridoxal + phosphate. The enzyme catalyses phosphoethanolamine + H2O = ethanolamine + phosphate. The catalysed reaction is N-phosphocreatine + H2O = creatine + phosphate. It catalyses the reaction ATP + H2O = ADP + phosphate + H(+). It carries out the reaction ADP + H2O = AMP + phosphate + H(+). The enzyme catalyses AMP + H2O = adenosine + phosphate. Its activity is regulated as follows. Phosphatase activity is specifically inhibited by 5-((5-chloro-2-methoxyphenyl)sulfonamido)nicotinamide (SBI-425). In terms of biological role, alkaline phosphatase that metabolizes various phosphate compounds and plays a key role in skeletal mineralization and adaptive thermogenesis. Has broad substrate specificity and can hydrolyze a considerable variety of compounds: however, only a few substrates, such as diphosphate (inorganic pyrophosphate; PPi), pyridoxal 5'-phosphate (PLP) and N-phosphocreatine are natural substrates. Plays an essential role in skeletal and dental mineralization via its ability to hydrolyze extracellular diphosphate, a potent mineralization inhibitor, to phosphate: it thereby promotes hydroxyapatite crystal formation and increases inorganic phosphate concentration. Acts in a non-redundant manner with PHOSPHO1 in skeletal mineralization: while PHOSPHO1 mediates the initiation of hydroxyapatite crystallization in the matrix vesicles (MVs), ALPL/TNAP catalyzes the spread of hydroxyapatite crystallization in the extracellular matrix. Also promotes dephosphorylation of osteopontin (SSP1), an inhibitor of hydroxyapatite crystallization in its phosphorylated state; it is however unclear whether ALPL/TNAP mediates SSP1 dephosphorylation via a direct or indirect manner. Catalyzes dephosphorylation of PLP to pyridoxal (PL), the transportable form of vitamin B6, in order to provide a sufficient amount of PLP in the brain, an essential cofactor for enzymes catalyzing the synthesis of diverse neurotransmitters. Additionally, also able to mediate ATP degradation in a stepwise manner to adenosine, thereby regulating the availability of ligands for purinergic receptors. Also capable of dephosphorylating microbial products, such as lipopolysaccharides (LPS) as well as other phosphorylated small-molecules, such as poly-inosine:cytosine (poly I:C). Acts as a key regulator of adaptive thermogenesis as part of the futile creatine cycle: localizes to the mitochondria of thermogenic fat cells and acts by mediating hydrolysis of N-phosphocreatine to initiate a futile cycle of creatine dephosphorylation and phosphorylation. During the futile creatine cycle, creatine and N-phosphocreatine are in a futile cycle, which dissipates the high energy charge of N-phosphocreatine as heat without performing any mechanical or chemical work. The polypeptide is Alkaline phosphatase, tissue-nonspecific isozyme (ALPL) (Felis catus (Cat)).